The chain runs to 37 residues: SCIKIGEDCDGDKDDCQCCRTNGYCSXYXLFGYLKSG.

It belongs to the neurotoxin 04 (omega-agtx) family. 03 (type II/III omega-agtx) subfamily. In terms of processing, disulfide bonds are present. Expressed by the venom gland.

The protein localises to the secreted. In terms of biological role, omega-agatoxins are antagonists of voltage-gated calcium channels. This toxin blocks calcium channels in insect central neurons but not at peripheral neuromuscular junctions. In vertebrates, it is broadly active against all high-threshold Cav1/CACNA1 channels and Cav2.2/CACNA1B channels. The sequence is that of Omega-agatoxin-Aa3d from Agelenopsis aperta (North American funnel-web spider).